Reading from the N-terminus, the 579-residue chain is Probable pectinesterase/pectinesterase inhibitor 7 (579 aa).

The first 20 residues, 1-20 (MESPIFILITLSFFLQSVLA), serve as a signal peptide directing secretion. Residues 22-185 (SQTLSNSSTI…TKLLGVSLAL (164 aa)) form a pectinesterase inhibitor 7 region. Residues asparagine 27, asparagine 115, asparagine 174, asparagine 274, asparagine 277, asparagine 287, asparagine 326, and asparagine 333 are each glycosylated (N-linked (GlcNAc...) asparagine). The interval 265–564 (VTVSQDGTGN…TVTGLFIEAD (300 aa)) is pectinesterase 7. Threonine 342 contributes to the substrate binding site. N-linked (GlcNAc...) asparagine glycosylation is present at asparagine 359. Glutamine 372 lines the substrate pocket. The Proton donor; for pectinesterase activity role is filled by aspartate 395. An intrachain disulfide couples cysteine 409 to cysteine 429. Residue aspartate 416 is the Nucleophile; for pectinesterase activity of the active site. Asparagine 462 and asparagine 475 each carry an N-linked (GlcNAc...) asparagine glycan. 2 residues coordinate substrate: arginine 484 and tryptophan 486. Residues asparagine 526, asparagine 533, asparagine 547, and asparagine 553 are each glycosylated (N-linked (GlcNAc...) asparagine).

The protein in the N-terminal section; belongs to the PMEI family. This sequence in the C-terminal section; belongs to the pectinesterase family. In terms of tissue distribution, expressed in siliques.

Its subcellular location is the secreted. The protein resides in the cell wall. The catalysed reaction is [(1-&gt;4)-alpha-D-galacturonosyl methyl ester](n) + n H2O = [(1-&gt;4)-alpha-D-galacturonosyl](n) + n methanol + n H(+). Its pathway is glycan metabolism; pectin degradation; 2-dehydro-3-deoxy-D-gluconate from pectin: step 1/5. Acts in the modification of cell walls via demethylesterification of cell wall pectin. This is Probable pectinesterase/pectinesterase inhibitor 7 (PME7) from Arabidopsis thaliana (Mouse-ear cress).